The sequence spans 302 residues: Lipooligosaccharide biosynthesis protein lex-1 (302 aa).

7 tandem repeats follow at residues S42–Q45, S46–Q49, S50–Q53, S54–Q57, S58–Q61, S62–Q65, and S66–Q69. The interval S42–Q69 is 7 X 4 AA tandem repeats of S-I-N-Q.

Belongs to the glycosyltransferase 25 family.

In terms of biological role, involved in extracellular lipooligosaccharide (LOS) biosynthesis and virulence expression. Involved in the synthesis of the oligosaccharide moiety of the LOS molecule by adding GalNAc. In Haemophilus influenzae (strain ATCC 51907 / DSM 11121 / KW20 / Rd), this protein is Lipooligosaccharide biosynthesis protein lex-1 (lex1).